Here is a 282-residue protein sequence, read N- to C-terminus: sn-glycerol-3-phosphate transport system permease protein UgpE (282 aa).

Transmembrane regions (helical) follow at residues 14–34 (LMLI…FVAS), 86–106 (IAIA…IVFF), 112–132 (MAFF…RILP), 136–156 (VIVD…LMAS), 201–221 (IAAL…WPLL), and 248–268 (WNYV…VVVL). The 192-residue stretch at 78-269 (LFNTFVVAIA…IPPVAVVVLM (192 aa)) folds into the ABC transmembrane type-1 domain.

This sequence belongs to the binding-protein-dependent transport system permease family. In terms of assembly, the complex is composed of two ATP-binding proteins (UgpC), two transmembrane proteins (UgpA and UgpE) and a solute-binding protein (UgpB).

The protein resides in the cell inner membrane. In terms of biological role, part of the ABC transporter complex UgpBAEC involved in sn-glycerol-3-phosphate (G3P) import. Probably responsible for the translocation of the substrate across the membrane. This is sn-glycerol-3-phosphate transport system permease protein UgpE (ugpE) from Rhizobium meliloti (strain 1021) (Ensifer meliloti).